We begin with the raw amino-acid sequence, 653 residues long: Glyceraldehyde-3-phosphate:ferredoxin oxidoreductase (653 aa).

Tungstopterin contacts are provided by R70, G89, R196, A197, G199, and R206. Residues C333 and C337 each contribute to the [4Fe-4S] cluster site. Tungstopterin is bound by residues D378, D383, and D544. C549 contacts [4Fe-4S] cluster.

It belongs to the AOR/FOR family. Monomer. [4Fe-4S] cluster is required as a cofactor. The cofactor is tungstopterin.

It catalyses the reaction D-glyceraldehyde 3-phosphate + 2 oxidized [2Fe-2S]-[ferredoxin] + H2O = (2R)-3-phosphoglycerate + 2 reduced [2Fe-2S]-[ferredoxin] + 3 H(+). Its activity is regulated as follows. Sensitive to oxygen. Activity increased by 58%-93% in the presence of acetyl phosphate, 3-phosphoglycerate or 2,3-bisphosphoglycerate at 10 mM concentration. Inhibited by up to 25% in the presence of crotonaldehyde or formaldehyde at 10 mM concentration. Inhibited by up to 50% by sodium dithionate. 3.5-fold increase in activity observed by addition of potassium phosphate or sodium arsenate at 200 mM concentration. Activity enhanced by potassium chloride, sodium citrate or sodium sulfate at 200 mM concentration. In terms of biological role, catalyzes the oxidation of glyceraldehyde-3-phosphate to 3-phosphoglycerate. Uses ferredoxin as electron acceptor. In vitro can also use benzyl viologen, but not NADP or NAD, as electron acceptor. Probably acts as a glycolytic enzyme in place of glyceraldehyde-3-phosphate dehydrogenase (GAPDH) and phosphoglycerate kinase (PGK) in an unusual Emden-Meyerhof glycolysis. This Pyrococcus furiosus (strain ATCC 43587 / DSM 3638 / JCM 8422 / Vc1) protein is Glyceraldehyde-3-phosphate:ferredoxin oxidoreductase.